The following is a 711-amino-acid chain: Dixin (711 aa).

Leu2 carries the N-myristoyl glycine lipid modification. The residue at position 13 (Val13) is a Phosphoserine. Residues 20–153 (EQQLQAYVAW…LVLALAAHFK (134 aa)) form the Calponin-homology (CH) domain. Positions 153–326 (KPGSSRTVSQ…LEKEMEEAKK (174 aa)) are actin-binding. Phosphoserine is present on Ser212. Disordered regions lie at residues 233-258 (GQQK…AKSE), 271-298 (VIIP…PGSR), and 584-623 (TQKK…SSPA). Residues 237–254 (SPSESSCSSLTSPSPIHS) are compositionally biased toward low complexity. Ser257 carries the phosphoserine modification. Residues 278 to 295 (IENRTDEPDSPSSRDWRP) show a composition bias toward basic and acidic residues. Residues 279–452 (ENRTDEPDSP…NRLLGEYKKE (174 aa)) are a coiled coil. Residues 597-623 (PRNQASSEYRASWPPNSTLPHSQSSPA) show a composition bias toward polar residues. One can recognise a DIX domain in the interval 600-680 (QASSEYRASW…HFKALDPEFG (81 aa)). Ser618 is subject to Phosphoserine.

Belongs to the DIXDC1 family. As to quaternary structure, may bind filamentous actin. Directly interacts (via DIX domain) with DVL2 (via DIX domain). Interacts with gamma-tubulin. Interacts with the complex composed of DVL2 and Rac. Interacts with AXIN1; competes with MAP3K1. Interacts with MAP3K4 preventing MAP3K4 interaction with AXIN1. Phosphorylated on tyrosine and serine residues. In terms of processing, polyubiquitinated, leading to its proteasomal degradation. WNT3A signaling increases DIXDC1 protein levels by inhibiting its ubiquitination and subsequent degradation. In terms of tissue distribution, abundantly expressed in brain and testis and to a lower extent in lung, kidney, colon, ovary and urinary bladder. Expressed in brain, liver, testis and spleen (at protein level). Expressed throughout the brain with strong expression in main and accessory olfactory bulbs, cerebral cortex, piriform cortex, hippocampus, habenular nucleus, dorsal thalamus, superior and inferior colliculi and cerebellum.

It localises to the cell junction. It is found in the focal adhesion. The protein resides in the cytoplasm. The protein localises to the cytoskeleton. Its subcellular location is the stress fiber. Positive effector of the Wnt signaling pathway; activates WNT3A signaling via DVL2. Regulates JNK activation by AXIN1 and DVL2. The sequence is that of Dixin (Dixdc1) from Mus musculus (Mouse).